A 112-amino-acid chain; its full sequence is Truncated ankyrin repeat protein B25 (112 aa).

It belongs to the orthopoxviruses B25 protein family.

This Bos taurus (Bovine) protein is Truncated ankyrin repeat protein B25.